The sequence spans 197 residues: Adenylate kinase (197 aa).

16 to 21 (GAGKGT) contributes to the ATP binding site. Positions 36 to 65 (STGDILRDHVARGTALGQRVKPILDAGQLV) are NMP. AMP-binding positions include T37, R42, 63 to 65 (QLV), 90 to 93 (GFPR), and Q97. The tract at residues 131–147 (ERGRQAALRGEPVRSDD) is LID. An ATP-binding site is contributed by R132. AMP is bound by residues R144 and R155. G183 serves as a coordination point for ATP.

It belongs to the adenylate kinase family. Monomer.

Its subcellular location is the cytoplasm. It catalyses the reaction AMP + ATP = 2 ADP. The protein operates within purine metabolism; AMP biosynthesis via salvage pathway; AMP from ADP: step 1/1. In terms of biological role, catalyzes the reversible transfer of the terminal phosphate group between ATP and AMP. Plays an important role in cellular energy homeostasis and in adenine nucleotide metabolism. The protein is Adenylate kinase of Deinococcus geothermalis (strain DSM 11300 / CIP 105573 / AG-3a).